We begin with the raw amino-acid sequence, 344 residues long: Small ribosomal subunit protein bS1m (344 aa).

Ser-327 is modified (phosphoserine).

This sequence belongs to the bacterial ribosomal protein bS1 family. In terms of assembly, component of the mitochondrial small ribosomal subunit (mt-SSU). Mature yeast 74S mitochondrial ribosomes consist of a small (37S) and a large (54S) subunit. The 37S small subunit contains a 15S ribosomal RNA (15S mt-rRNA) and 34 different proteins. The 54S large subunit contains a 21S rRNA (21S mt-rRNA) and 46 different proteins.

The protein localises to the mitochondrion. Its function is as follows. Component of the mitochondrial ribosome (mitoribosome), a dedicated translation machinery responsible for the synthesis of mitochondrial genome-encoded proteins, including at least some of the essential transmembrane subunits of the mitochondrial respiratory chain. The mitoribosomes are attached to the mitochondrial inner membrane and translation products are cotranslationally integrated into the membrane. bS1m functionally interacts with the 5'-UTR of mitochondrial mRNAs. This Saccharomyces cerevisiae (strain ATCC 204508 / S288c) (Baker's yeast) protein is Small ribosomal subunit protein bS1m (MRP51).